Reading from the N-terminus, the 314-residue chain is Acetyl-coenzyme A carboxylase carboxyl transferase subunit alpha (314 aa).

The 258-residue stretch at 32 to 289 (EIDMLEASLK…KKMFLKHLNE (258 aa)) folds into the CoA carboxyltransferase C-terminal domain.

Belongs to the AccA family. As to quaternary structure, acetyl-CoA carboxylase is a heterohexamer composed of biotin carboxyl carrier protein (AccB), biotin carboxylase (AccC) and two subunits each of ACCase subunit alpha (AccA) and ACCase subunit beta (AccD).

It localises to the cytoplasm. The catalysed reaction is N(6)-carboxybiotinyl-L-lysyl-[protein] + acetyl-CoA = N(6)-biotinyl-L-lysyl-[protein] + malonyl-CoA. It participates in lipid metabolism; malonyl-CoA biosynthesis; malonyl-CoA from acetyl-CoA: step 1/1. In terms of biological role, component of the acetyl coenzyme A carboxylase (ACC) complex. First, biotin carboxylase catalyzes the carboxylation of biotin on its carrier protein (BCCP) and then the CO(2) group is transferred by the carboxyltransferase to acetyl-CoA to form malonyl-CoA. In Staphylococcus epidermidis (strain ATCC 12228 / FDA PCI 1200), this protein is Acetyl-coenzyme A carboxylase carboxyl transferase subunit alpha.